Here is a 510-residue protein sequence, read N- to C-terminus: Proline--tRNA ligase (510 aa).

It belongs to the class-II aminoacyl-tRNA synthetase family. ProS type 3 subfamily. In terms of assembly, homodimer.

Its subcellular location is the cytoplasm. The enzyme catalyses tRNA(Pro) + L-proline + ATP = L-prolyl-tRNA(Pro) + AMP + diphosphate. Functionally, catalyzes the attachment of proline to tRNA(Pro) in a two-step reaction: proline is first activated by ATP to form Pro-AMP and then transferred to the acceptor end of tRNA(Pro). This chain is Proline--tRNA ligase, found in Sphingomonas elodea.